A 355-amino-acid chain; its full sequence is DNA-directed RNA polymerase subunit alpha (355 aa).

Residues 1 to 248 (MYYDDGIPVF…EQLQPFISSD (248 aa)) form an alpha N-terminal domain (alpha-NTD) region. Residues 267 to 355 (YDPILLRKVD…ELARQHTDED (89 aa)) form an alpha C-terminal domain (alpha-CTD) region.

It belongs to the RNA polymerase alpha chain family. Homodimer. The RNAP catalytic core consists of 2 alpha, 1 beta, 1 beta' and 1 omega subunit. When a sigma factor is associated with the core the holoenzyme is formed, which can initiate transcription.

The catalysed reaction is RNA(n) + a ribonucleoside 5'-triphosphate = RNA(n+1) + diphosphate. DNA-dependent RNA polymerase catalyzes the transcription of DNA into RNA using the four ribonucleoside triphosphates as substrates. This is DNA-directed RNA polymerase subunit alpha from Wolbachia sp. subsp. Brugia malayi (strain TRS).